We begin with the raw amino-acid sequence, 243 residues long: NAD(P)H-quinone oxidoreductase subunit K, chloroplastic (243 aa).

[4Fe-4S] cluster is bound by residues C65, C66, C130, and C161.

This sequence belongs to the complex I 20 kDa subunit family. NDH is composed of at least 16 different subunits, 5 of which are encoded in the nucleus. [4Fe-4S] cluster is required as a cofactor.

Its subcellular location is the plastid. The protein localises to the chloroplast thylakoid membrane. The enzyme catalyses a plastoquinone + NADH + (n+1) H(+)(in) = a plastoquinol + NAD(+) + n H(+)(out). It carries out the reaction a plastoquinone + NADPH + (n+1) H(+)(in) = a plastoquinol + NADP(+) + n H(+)(out). Functionally, NDH shuttles electrons from NAD(P)H:plastoquinone, via FMN and iron-sulfur (Fe-S) centers, to quinones in the photosynthetic chain and possibly in a chloroplast respiratory chain. The immediate electron acceptor for the enzyme in this species is believed to be plastoquinone. Couples the redox reaction to proton translocation, and thus conserves the redox energy in a proton gradient. The polypeptide is NAD(P)H-quinone oxidoreductase subunit K, chloroplastic (Marchantia polymorpha (Common liverwort)).